Reading from the N-terminus, the 478-residue chain is BUB3-interacting and GLEBS motif-containing protein ZNF207 (478 aa).

Positions M1–E92 are microtubule-binding region. 2 C2H2-type zinc fingers span residues P11–H34 and F35–H58. The segment covering Q99–D111 has biased composition (basic and acidic residues). Disordered regions lie at residues Q99–P157, A238–E276, V300–K362, and R384–Y478. Positions D112 to S121 are enriched in acidic residues. The segment covering F127 to Q136 has biased composition (polar residues). A compositionally biased stretch (pro residues) spans M142–P157. Composition is skewed to low complexity over residues S267–E276, T310–K362, and Q433–Y446. Residues A359–Q391 form a GLEBS region. A compositionally biased stretch (pro residues) spans G447 to M467.

Interacts (via GLEBS region) with BUB3. Ubiquitous.

Its subcellular location is the nucleus. It is found in the chromosome. It localises to the centromere. The protein localises to the kinetochore. The protein resides in the cytoplasm. Its subcellular location is the cytoskeleton. It is found in the spindle. Functionally, kinetochore- and microtubule-binding protein that plays a key role in spindle assembly. ZNF207/BuGZ is mainly composed of disordered low-complexity regions and undergoes phase transition or coacervation to form temperature-dependent liquid droplets. Coacervation promotes microtubule bundling and concentrates tubulin, promoting microtubule polymerization and assembly of spindle and spindle matrix by concentrating its building blocks. Also acts as a regulator of mitotic chromosome alignment by mediating the stability and kinetochore loading of BUB3. Mechanisms by which BUB3 is protected are unclear: according to a first report, ZNF207/BuGZ may act by blocking ubiquitination and proteasomal degradation of BUB3. According to another report, the stabilization is independent of the proteasome. The polypeptide is BUB3-interacting and GLEBS motif-containing protein ZNF207 (Homo sapiens (Human)).